We begin with the raw amino-acid sequence, 124 residues long: Small ribosomal subunit protein uS12 (124 aa).

Asp-89 is subject to 3-methylthioaspartic acid.

The protein belongs to the universal ribosomal protein uS12 family. Part of the 30S ribosomal subunit. Contacts proteins S8 and S17. May interact with IF1 in the 30S initiation complex.

With S4 and S5 plays an important role in translational accuracy. Functionally, interacts with and stabilizes bases of the 16S rRNA that are involved in tRNA selection in the A site and with the mRNA backbone. Located at the interface of the 30S and 50S subunits, it traverses the body of the 30S subunit contacting proteins on the other side and probably holding the rRNA structure together. The combined cluster of proteins S8, S12 and S17 appears to hold together the shoulder and platform of the 30S subunit. The chain is Small ribosomal subunit protein uS12 from Vibrio cholerae serotype O1 (strain ATCC 39315 / El Tor Inaba N16961).